The chain runs to 377 residues: Palmitoyltransferase ZDHHC16 (377 aa).

Topologically, residues 1–77 (MRGQRSLLLG…VYWLVDNVIR (77 aa)) are cytoplasmic. Residues 78-98 (WFGVVFVVLVIVLTGSIVAIA) traverse the membrane as a helical segment. The Lumenal portion of the chain corresponds to 99–116 (YLCVLPLILRTYSVPRLC). A helical membrane pass occupies residues 117–137 (WHFFYSHWNLILIVFHYYQAI). Topologically, residues 138 to 198 (TTPPGYPPQG…NNCVGHYNHR (61 aa)) are cytoplasmic. A DHHC domain is found at 155–205 (SICKKCIYPKPARTHHCSICNRCVLKMDHHCPWLNNCVGHYNHRYFFSFCF). The active-site S-palmitoyl cysteine intermediate is the cysteine 185. A helical transmembrane segment spans residues 199–219 (YFFSFCFFMTLGCVYCSYGSW). The Lumenal portion of the chain corresponds to 220–266 (DLFREAYAAIEKMKQLDKNKLQAVANQTYHQTPPPIFSFRERMTHKS). A helical membrane pass occupies residues 267-287 (LVYLWFLCSSVALALGALTVW). Topologically, residues 288-377 (HAVLISRGET…TAHSASVMAV (90 aa)) are cytoplasmic.

The protein belongs to the DHHC palmitoyltransferase family. As to quaternary structure, interacts with ABL1. Interacts with COPS5/JAB1.

The protein resides in the endoplasmic reticulum membrane. The catalysed reaction is L-cysteinyl-[protein] + hexadecanoyl-CoA = S-hexadecanoyl-L-cysteinyl-[protein] + CoA. Functionally, palmitoyl acyltransferase that mediates palmitoylation of proteins such as PLN and ZDHHC6. Required during embryonic heart development and cardiac function, possibly by mediating palmitoylation of PLN, thereby affecting PLN phosphorylation and homooligomerization. Also required for eye development. Palmitoylates ZDHHC6, affecting the quaternary assembly of ZDHHC6, its localization, stability and function. May play a role in DNA damage response. May be involved in apoptosis regulation. Involved in the proliferation of neural stem cells by regulating the FGF/ERK pathway. In Macaca fascicularis (Crab-eating macaque), this protein is Palmitoyltransferase ZDHHC16.